Reading from the N-terminus, the 268-residue chain is Trans-aconitate 2-methyltransferase (268 aa).

Belongs to the methyltransferase superfamily. Tam family.

The protein resides in the cytoplasm. The catalysed reaction is trans-aconitate + S-adenosyl-L-methionine = (E)-3-(methoxycarbonyl)pent-2-enedioate + S-adenosyl-L-homocysteine. Its function is as follows. Catalyzes the S-adenosylmethionine monomethyl esterification of trans-aconitate. The chain is Trans-aconitate 2-methyltransferase from Delftia acidovorans (strain DSM 14801 / SPH-1).